The chain runs to 570 residues: MNLEELVLKYALANAVKYGGKADVKAVMSKIMAEVPELRPKAREVKSMVEAVVARVNSMSLEEQLRLLRERWPETLEERRVEQKRPGIENLAELPNVKGGVVVRFAPNPDFVLHLGSARPAILNYAYRLKYGGKFILRFEDTDPRTKKPLVTSEINAYETIREDLKWLGIKWDEEYIQSMRMEIYYEHIKKLLEKGAAYVDLCRPEEWRKLRNAGRACPHREQSPEENLELWDRMLEGRFKEGEAVVRIKTDLSHPDPSVRDWVAFRIIDTSKTPHPLVGDKYIVWPTYNFAVSIDDHLMGITHVLRAQEHSVNTIKQSYIFKHFGWEQPVTIHFGRLKIEGASLSKSKLKALGVRYDDISLPTLAGLRNRGILPEAIWELILTVGVKPSDSTIALSNLFALNRKRIEPIANRYMYVADPIKLVFKSDRELLAKIPLHPSFRERGERIYKFGPGTIELFVPRQDIKPGAVVRLMELANVEIIAVENGVAHGRLHSVGIDEARKVGAPIIQWVYEPIEIHVVKPVAVGKKVEEIGLGESALEKVETGAYVQFMRYGFLKKVGPSAFVYVHD.

Residues 107 to 117 carry the 'HIGH' region motif; sequence PNPDFVLHLGS.

The protein belongs to the class-I aminoacyl-tRNA synthetase family. Glutamate--tRNA ligase type 2 subfamily.

It is found in the cytoplasm. The catalysed reaction is tRNA(Glu) + L-glutamate + ATP = L-glutamyl-tRNA(Glu) + AMP + diphosphate. Its function is as follows. Catalyzes the attachment of glutamate to tRNA(Glu) in a two-step reaction: glutamate is first activated by ATP to form Glu-AMP and then transferred to the acceptor end of tRNA(Glu). This Pyrobaculum islandicum (strain DSM 4184 / JCM 9189 / GEO3) protein is Glutamate--tRNA ligase.